Here is an 80-residue protein sequence, read N- to C-terminus: Serine protease inhibitor Kazal-type 6 (80 aa).

Positions 1–23 are cleaved as a signal peptide; sequence MKTSGVFLLLSLALFCFFSGVFG. Glutamine 24 bears the Pyrrolidone carboxylic acid mark. The region spanning 24-80 is the Kazal-like domain; sequence QGAQVDCAEFKDPKVYCTRESNPHCGSDGQTYGNKCAFCKAVMKSGGKINLKHRGKC. 3 disulfide bridges follow: cysteine 30-cysteine 62, cysteine 40-cysteine 59, and cysteine 48-cysteine 80.

Seminal plasma.

Its subcellular location is the secreted. Functionally, serine protease inhibitor selective for kallikreins. Efficiently inhibits KLK4, KLK5, KLK6, KLK7, KLK12, KLK13 and KLK14. Doesn't inhibit KLK8. Inhibits acrosin, trypsin, and chymotrypsin. The sequence is that of Serine protease inhibitor Kazal-type 6 (SPINK6) from Bos taurus (Bovine).